The primary structure comprises 781 residues: DEAD-box ATP-dependent RNA helicase 50 (781 aa).

5 disordered regions span residues 72-103, 117-148, 166-240, 254-292, and 313-342; these read EFAP…LTAS, GKVT…DEGF, IPRS…KGDR, GRAI…REDR, and YNPR…RGWG. The segment covering 79 to 88 has biased composition (low complexity); it reads SDLLSSIPSE. Acidic residues predominate over residues 130–143; sequence EEEDEDDASDENYS. Residues 171–197 show a composition bias toward basic and acidic residues; it reads KSAERNEVKRASKVRESRESRRDLDRL. A compositionally biased stretch (acidic residues) spans 198 to 208; that stretch reads EGDDEDVDEVS. Polar residues predominate over residues 216 to 226; sequence NQRAGSRSSYS. A compositionally biased stretch (basic and acidic residues) spans 254-274; that stretch reads GRAIDEVSNPRKFNDNERAES. Residues 275–286 show a composition bias toward low complexity; that stretch reads RSSYSRDSSANS. Basic and acidic residues predominate over residues 313 to 325; sequence YNPRRFTDNERGL. The Q motif signature appears at 374–402; sequence KTFAEIGCSEDMMKALKEQNFDRPAHIQA. The region spanning 405–586 is the Helicase ATP-binding domain; it reads FSPVIDGKSC…VEVFPDCEVV (182 aa). 418–425 lines the ATP pocket; that stretch reads DQSGSGKT. Residues 533-536 carry the DEAD box motif; it reads DEVD. One can recognise a Helicase C-terminal domain in the interval 621–781; that stretch reads NKKTALLQIM…DVPNAYEFTT (161 aa).

This sequence belongs to the DEAD box helicase family.

The catalysed reaction is ATP + H2O = ADP + phosphate + H(+). Probably involved in resistance to biotic and abiotic stresses. This is DEAD-box ATP-dependent RNA helicase 50 (RH50) from Arabidopsis thaliana (Mouse-ear cress).